The primary structure comprises 375 residues: Delta(9) fatty acid conjugase-like enzyme (375 aa).

Helical transmembrane passes span 38 to 58 and 66 to 86; these read LSLS…LFYV and LPYS…GAFL. The Histidine box-1 signature appears at 94–98; that stretch reads HECGH. The Histidine box-2 signature appears at 130-134; sequence HRNHH. 3 helical membrane passes run 168–188, 219–239, and 241–261; these read FGLV…YLIF, VFFS…IAIA, and GAML…AFIF. Residues 307-311 carry the Histidine box-3 motif; the sequence is HVVHH.

The protein belongs to the fatty acid desaturase type 1 family.

The protein resides in the membrane. In terms of biological role, involved in the biosynthesis of dimorphecolic acid (9-OH-18:2(10E,12E)). Catalyzes the formation of the C-9 hydroxyl group and the (E)-delta(10) double bond from the trans-linoleic acid (16:2(9Z,12E)) produced by FAD2-1. Very limited activity with cis-linoleic acid (16:2(9Z,12Z)). The chain is Delta(9) fatty acid conjugase-like enzyme from Dimorphotheca sinuata (African daisy).